The following is a 216-amino-acid chain: Probable nicotinate-nucleotide adenylyltransferase (216 aa).

The protein belongs to the NadD family.

It catalyses the reaction nicotinate beta-D-ribonucleotide + ATP + H(+) = deamido-NAD(+) + diphosphate. It participates in cofactor biosynthesis; NAD(+) biosynthesis; deamido-NAD(+) from nicotinate D-ribonucleotide: step 1/1. Functionally, catalyzes the reversible adenylation of nicotinate mononucleotide (NaMN) to nicotinic acid adenine dinucleotide (NaAD). In Shewanella baltica (strain OS185), this protein is Probable nicotinate-nucleotide adenylyltransferase.